A 360-amino-acid chain; its full sequence is Aminomethyltransferase (360 aa).

The protein belongs to the GcvT family. The glycine cleavage system is composed of four proteins: P, T, L and H.

It catalyses the reaction N(6)-[(R)-S(8)-aminomethyldihydrolipoyl]-L-lysyl-[protein] + (6S)-5,6,7,8-tetrahydrofolate = N(6)-[(R)-dihydrolipoyl]-L-lysyl-[protein] + (6R)-5,10-methylene-5,6,7,8-tetrahydrofolate + NH4(+). In terms of biological role, the glycine cleavage system catalyzes the degradation of glycine. The chain is Aminomethyltransferase from Legionella pneumophila subsp. pneumophila (strain Philadelphia 1 / ATCC 33152 / DSM 7513).